The sequence spans 341 residues: Fructose-1,6-bisphosphatase, cytosolic (341 aa).

Residues E71, E100, D121, L123, and D124 each coordinate Mg(2+). Residues 124–127, N215, Y247, Y267, and K277 each bind substrate; that span reads DGSS. A Mg(2+)-binding site is contributed by E283.

It belongs to the FBPase class 1 family. Mg(2+) is required as a cofactor.

It localises to the cytoplasm. The enzyme catalyses beta-D-fructose 1,6-bisphosphate + H2O = beta-D-fructose 6-phosphate + phosphate. The sequence is that of Fructose-1,6-bisphosphatase, cytosolic from Spinacia oleracea (Spinach).